The sequence spans 79 residues: Acyl carrier protein (79 aa).

The 76-residue stretch at 2–77 (ESIEQRVKKI…QAIDYINSHG (76 aa)) folds into the Carrier domain. At Ser-37 the chain carries O-(pantetheine 4'-phosphoryl)serine.

It belongs to the acyl carrier protein (ACP) family. 4'-phosphopantetheine is transferred from CoA to a specific serine of apo-ACP by AcpS. This modification is essential for activity because fatty acids are bound in thioester linkage to the sulfhydryl of the prosthetic group.

It localises to the cytoplasm. It functions in the pathway lipid metabolism; fatty acid biosynthesis. Functionally, carrier of the growing fatty acid chain in fatty acid biosynthesis. The chain is Acyl carrier protein from Bordetella avium (strain 197N).